The primary structure comprises 207 residues: Large ribosomal subunit protein bL25 (207 aa).

This sequence belongs to the bacterial ribosomal protein bL25 family. CTC subfamily. In terms of assembly, part of the 50S ribosomal subunit; part of the 5S rRNA/L5/L18/L25 subcomplex. Contacts the 5S rRNA. Binds to the 5S rRNA independently of L5 and L18.

In terms of biological role, this is one of the proteins that binds to the 5S RNA in the ribosome where it forms part of the central protuberance. The chain is Large ribosomal subunit protein bL25 from Azorhizobium caulinodans (strain ATCC 43989 / DSM 5975 / JCM 20966 / LMG 6465 / NBRC 14845 / NCIMB 13405 / ORS 571).